A 518-amino-acid polypeptide reads, in one-letter code: Macrophage receptor MARCO (518 aa).

Residues M1–F48 are Cytoplasmic-facing. Residues C49–I69 form a helical; Signal-anchor for type II membrane protein membrane-spanning segment. The Extracellular portion of the chain corresponds to Q70–S518. N-linked (GlcNAc...) asparagine glycosylation is found at N87 and N138. The segment at Q147–M426 is disordered. The 270-residue stretch at K149–E418 folds into the Collagen-like domain. Residues S154–A163 are compositionally biased toward low complexity. A compositionally biased stretch (basic and acidic residues) spans K239–D250. Low complexity-rich tracts occupy residues P293 to P314 and R325 to A344. Residues K410–Q421 show a composition bias toward basic and acidic residues. An SRCR domain is found at V423 to S518. Intrachain disulfides connect C446–C507, C459–C517, and C487–C497.

Homotrimer; disulfide-linked. Trimers may assemble in larger oligomers thus resulting in the creation of a large surface capable of interacting with very large ligands. Post-translationally, N-glycosylated. As to expression, expressed in subpopulations of macrophages in the spleen and the medullary cord of lymph nodes (at protein level).

Its subcellular location is the cell membrane. Functionally, pattern recognition receptor (PRR) which binds Gram-positive and Gram-negative bacteria. Also plays a role in binding of unopsonized particles by alveolar macrophages. Binds to the secretoglobin SCGB3A2. The polypeptide is Macrophage receptor MARCO (Marco) (Mus musculus (Mouse)).